Reading from the N-terminus, the 132-residue chain is Large-conductance mechanosensitive channel (132 aa).

Transmembrane regions (helical) follow at residues 14-34, 38-58, and 67-87; these read VVDL…VSSL, IITP…LHFG, and GNFI…FMFV.

This sequence belongs to the MscL family. Homopentamer.

The protein localises to the cell membrane. Channel that opens in response to stretch forces in the membrane lipid bilayer. May participate in the regulation of osmotic pressure changes within the cell. The sequence is that of Large-conductance mechanosensitive channel from Bacillus cereus (strain B4264).